The sequence spans 619 residues: Phosphomethylpyrimidine synthase (619 aa).

Polar residues predominate over residues 1–11; that stretch reads MHEQRSLTMNA. A disordered region spans residues 1–25; it reads MHEQRSLTMNALTPAVSTGPLPASR. Substrate-binding positions include Asn220, Met249, Tyr278, His314, 334-336, 375-378, and Glu414; these read SRG and DGLR. His418 is a Zn(2+) binding site. Tyr441 provides a ligand contact to substrate. Position 482 (His482) interacts with Zn(2+). [4Fe-4S] cluster contacts are provided by Cys562, Cys565, and Cys570.

Belongs to the ThiC family. In terms of assembly, homodimer. It depends on [4Fe-4S] cluster as a cofactor.

It catalyses the reaction 5-amino-1-(5-phospho-beta-D-ribosyl)imidazole + S-adenosyl-L-methionine = 4-amino-2-methyl-5-(phosphooxymethyl)pyrimidine + CO + 5'-deoxyadenosine + formate + L-methionine + 3 H(+). Its pathway is cofactor biosynthesis; thiamine diphosphate biosynthesis. Catalyzes the synthesis of the hydroxymethylpyrimidine phosphate (HMP-P) moiety of thiamine from aminoimidazole ribotide (AIR) in a radical S-adenosyl-L-methionine (SAM)-dependent reaction. This chain is Phosphomethylpyrimidine synthase, found in Mesorhizobium japonicum (strain LMG 29417 / CECT 9101 / MAFF 303099) (Mesorhizobium loti (strain MAFF 303099)).